The primary structure comprises 364 residues: D-alanine--D-alanine ligase A (364 aa).

Residues 145-348 (KRLLRDAGLN…YTDLITRLIE (204 aa)) enclose the ATP-grasp domain. 175–230 (ESKLGLPLFVKPANQGSSVGVSKVTSEEQYAIAVDLAFEFDHKVIVEQGIKGREIE) is a binding site for ATP. 3 residues coordinate Mg(2+): aspartate 302, glutamate 315, and asparagine 317.

The protein belongs to the D-alanine--D-alanine ligase family. Requires Mg(2+) as cofactor. The cofactor is Mn(2+).

Its subcellular location is the cytoplasm. The enzyme catalyses 2 D-alanine + ATP = D-alanyl-D-alanine + ADP + phosphate + H(+). It functions in the pathway cell wall biogenesis; peptidoglycan biosynthesis. Functionally, cell wall formation. In Escherichia coli O157:H7, this protein is D-alanine--D-alanine ligase A (ddlA).